The primary structure comprises 344 residues: Meiotically up-regulated gene 10 protein (344 aa).

Residues 48-207 form the DH domain; sequence EFNSILQEII…RELCSYIDQE (160 aa).

The protein resides in the cytoplasm. It localises to the nucleus. Has a role in meiosis. This chain is Meiotically up-regulated gene 10 protein (mug10), found in Schizosaccharomyces pombe (strain 972 / ATCC 24843) (Fission yeast).